Consider the following 142-residue polypeptide: Relaxin-3 (142 aa).

Residues 1 to 25 (MARYMLLLLLAVWVLTGELWPGAEA) form the signal peptide. 3 disulfide bridges follow: C35-C129, C47-C142, and C128-C133. Residues 55-118 (SDILAHEAMG…GTPGVLRGSR (64 aa)) constitute a propeptide, connecting peptide.

It belongs to the insulin family. Heterodimer of a B chain and an A chain linked by two disulfide bonds.

The protein resides in the secreted. In terms of biological role, may play a role in neuropeptide signaling processes. Ligand for LGR7, RXFP3 and RXFP4. This Homo sapiens (Human) protein is Relaxin-3 (RLN3).